The following is a 425-amino-acid chain: Synaptotagmin-4 (425 aa).

Topologically, residues methionine 1 to threonine 16 are vesicular. The chain crosses the membrane as a helical span at residues valine 17–cysteine 37. Topologically, residues cysteine 38–glycine 425 are cytoplasmic. Residues threonine 127–serine 147 form a disordered region. Serine 135 bears the Phosphoserine; by MAPK8 mark. Residues glutamate 137–threonine 146 show a composition bias toward low complexity. C2 domains follow at residues lysine 153–threonine 274 and glycine 287–histidine 420. 3 residues coordinate Ca(2+): aspartate 246, serine 249, and aspartate 252.

This sequence belongs to the synaptotagmin family. As to quaternary structure, interacts with KIF1A; the interaction increases in presence of calcium and decreases when SYT4 is phosphorylated at Ser-135. The cofactor is Ca(2+). Phosphorylation at Ser-135 by MAPK8/JNK1 reduces interaction with KIF1A and neuronal dense core vesicles mobility. Expressed in many regions of the nervous system but is undetectable in extra neural tissues.

Its subcellular location is the cytoplasmic vesicle. The protein resides in the secretory vesicle. It is found in the neuronal dense core vesicle membrane. In terms of biological role, synaptotagmin family member which does not bind Ca(2+). Plays a role in dendrite formation by melanocytes. Synaptotagmin family member which does not bind Ca(2+). Involved in neuronal dense core vesicles (DCVs) mobility through its interaction with KIF1A. Upon increased neuronal activity, phosphorylation by MAPK8/JNK1 destabilizes the interaction with KIF1A and captures DCVs to synapses. Plays a role in dendrite formation by melanocytes. The polypeptide is Synaptotagmin-4 (Syt4) (Mus musculus (Mouse)).